A 338-amino-acid chain; its full sequence is Lumican (338 aa).

The first 18 residues, 1-18 (MNVCTFTLVLALVGSVSG), serve as a signal peptide directing secretion. At Q19 the chain carries Pyrrolidone carboxylic acid. Sulfotyrosine is present on residues Y20, Y21, Y23, and Y30. In terms of domain architecture, LRRNT spans 28 to 66 (FMYGELSPNCAPECNCPHSYPTAMYCDDLKLKSVPMVPP). 8 LRR repeats span residues 67-88 (GIKY…AFEN), 91-114 (DLQW…VFSK), 117-137 (QLKK…PLPK), 138-159 (SLQD…DGLV), 160-181 (NLTF…ASLK), 185-205 (SLEY…GLPT), 206-227 (SLLT…YFNR), and 230-250 (GLQY…PGNS). N-linked (GlcNAc...) (keratan sulfate) asparagine glycosylation is present at N88. A glycan (N-linked (GlcNAc...) (keratan sulfate) asparagine) is linked at N127. N-linked (GlcNAc...) (keratan sulfate) asparagine glycosylation is present at N160. Residue N252 is glycosylated (N-linked (GlcNAc...) (keratan sulfate) asparagine). 2 LRR repeats span residues 255–276 (SLLE…NENL) and 277–296 (ENYY…SFCK). C295 and C328 are joined by a disulfide. Residue S304 is modified to Phosphoserine. The LRR 11 repeat unit spans residues 305-326 (KIKHLRLDGNPLTQSSLPPDMY).

Belongs to the small leucine-rich proteoglycan (SLRP) family. SLRP class II subfamily. As to quaternary structure, binds to laminin. Post-translationally, contains keratan sulfate.

It localises to the secreted. It is found in the extracellular space. The protein localises to the extracellular matrix. The polypeptide is Lumican (Lum) (Rattus norvegicus (Rat)).